Reading from the N-terminus, the 465-residue chain is Monocarboxylate transporter 4 (465 aa).

At 2 to 17 (GGAVVDEGPTGVKAPD) the chain is on the cytoplasmic side. A helical transmembrane segment spans residues 18–38 (GGWGWAVLFGCFVITGFSYAF). Topologically, residues 39 to 61 (PKAVSVFFKELIQEFGIGYSDTA) are extracellular. The helical transmembrane segment at 62 to 82 (WISSILLAMLYGTGPLCSVCV) threads the bilayer. Over 83-84 (NR) the chain is Cytoplasmic. A helical transmembrane segment spans residues 85 to 105 (FGCRPVMLVGGLFASLGMVAA). At 106–109 (SFCR) the chain is on the extracellular side. The helical transmembrane segment at 110–130 (SIIQVYLTTGVITGLGLALNF) threads the bilayer. Topologically, residues 131-149 (QPSLIMLNRYFSKRRPMAN) are cytoplasmic. A helical membrane pass occupies residues 150 to 170 (GLAAAGSPVFLCALSPLGQLL). Residues 171-179 (QDRYGWRGG) are Extracellular-facing. The helical transmembrane segment at 180–200 (FLILGGLLLNCCVCAALMRPL) threads the bilayer. Residues 201–227 (VVTAQPGSGPPRPSRRLLDLSVFRDRG) lie on the Cytoplasmic side of the membrane. Residues 228–248 (FVLYAVAASVMVLGLFVPPVF) form a helical membrane-spanning segment. Residues 249 to 264 (VVSYAKDLGVPDTKAA) lie on the Extracellular side of the membrane. The chain crosses the membrane as a helical span at residues 265–285 (FLLTILGFIDIFARPAAGFVA). Over 286 to 294 (GLGKVRPYS) the chain is Cytoplasmic. The chain crosses the membrane as a helical span at residues 295–315 (VYLFSFSMFFNGLADLAGSTA). The Extracellular segment spans residues 316-317 (GD). Residues 318–338 (YGGLVVFCIFFGISYGMVGAL) form a helical membrane-spanning segment. Residues 339-351 (QFEVLMAIVGTHK) lie on the Cytoplasmic side of the membrane. Residues 352-372 (FSSAIGLVLLMEAVAVLVGPP) form a helical membrane-spanning segment. Residues 373–384 (SGGKLLDATHVY) are Extracellular-facing. A helical transmembrane segment spans residues 385–405 (MYVFILAGAEVLTSSLILLLG). Topologically, residues 406–465 (NFFCIRKKPKEPQPEVAAAEEEKLHKPPADSGVDLREVEHFLKAEPEKNGEVVHTPETSV) are cytoplasmic. Positions 419 to 438 (PEVAAAEEEKLHKPPADSGV) are disordered. 2 basolateral sorting signal regions span residues 423-441 (AAEEEKLHKPPADSGVDLR) and 441-465 (REVEHFLKAEPEKNGEVVHTPETSV). The span at 425–438 (EEEKLHKPPADSGV) shows a compositional bias: basic and acidic residues. S436 carries the post-translational modification Phosphoserine. At T460 the chain carries Phosphothreonine. S464 carries the phosphoserine modification.

This sequence belongs to the major facilitator superfamily. Monocarboxylate porter (TC 2.A.1.13) family. As to quaternary structure, interacts with BSG; interaction mediates SLC16A3 targeting to the plasma membrane. In terms of tissue distribution, highly expressed in skeletal muscle.

Its subcellular location is the cell membrane. It is found in the basolateral cell membrane. It catalyses the reaction (S)-lactate(in) + H(+)(in) = (S)-lactate(out) + H(+)(out). The enzyme catalyses pyruvate(out) + H(+)(out) = pyruvate(in) + H(+)(in). In terms of biological role, proton-dependent transporter of monocarboxylates such as L-lactate and pyruvate. Plays a predominant role in L-lactate efflux from highly glycolytic cells. This Homo sapiens (Human) protein is Monocarboxylate transporter 4 (SLC16A3).